The following is a 1664-amino-acid chain: MYND-type zinc finger-containing chromatin reader Zmynd8 (1664 aa).

3 stretches are compositionally biased toward low complexity: residues 1–16 (MEST…SLKS), 30–40 (SPQPQLQSSSL), and 61–84 (SAPP…INVG). 3 disordered regions span residues 1 to 84 (MEST…INVG), 251 to 271 (SLSN…LRSE), and 295 to 323 (LALN…KTPE). Basic and acidic residues predominate over residues 258 to 271 (NDDKGPRRSNLRSE). The segment covering 296–308 (ALNTSGEGESSLF) has biased composition (polar residues). Positions 309–320 (SDASDTKTTTAK) are enriched in low complexity. Residues 343 to 389 (DPFCWKCRGCGKLMPCSKCLRSFHSYCVRPATTKFDSSWKCPECQVI) form a PHD-type zinc finger. Residues Cys346, Cys349, Cys358, Cys361, His366, Cys369, Cys383, and Cys386 each contribute to the Zn(2+) site. A Bromo domain is found at 401–504 (VSVDLLSQLL…KVCRQEANEI (104 aa)). The Zn(2+) site is built by Cys507, Cys510, and Cys525. The PWWP domain occupies 528 to 579 (PHLLLWAKLKGFPYWPAKAMGSSNSTLVNVRFFGKHDRAFVPVKDCFLYSAQ). 4 disordered regions span residues 672 to 693 (KTKA…KKLS), 747 to 815 (ESVE…QNEN), 857 to 905 (KIPR…RQQE), and 919 to 1139 (TEVM…TNTS). Positions 676-690 (TESGNESDQSPSPTK) are enriched in polar residues. Residues 775–784 (HKRKSKHARK) are compositionally biased toward basic residues. A compositionally biased stretch (basic and acidic residues) spans 785–800 (QHDNQDNQIEEAEKTG). Pro residues predominate over residues 874–884 (IPLPTAPPPKQ). The span at 935–952 (PANQPQTDQVPLQQETIT) shows a compositional bias: polar residues. Residues 953–962 (AQPESQMPAA) show a composition bias toward low complexity. Residues 1006-1019 (PPMPLPMPPPPPLP) are compositionally biased toward pro residues. The segment covering 1037–1053 (TTIQRVSQKQGGKSTDT) has biased composition (polar residues). Residues 1073 to 1097 (SPTHSPLLSTAPSPSASPKPTSTLA) are compositionally biased toward low complexity. Residues Cys1399, Cys1402, Cys1410, Cys1411, Cys1417, Cys1421, His1429, and Cys1433 each coordinate Zn(2+). The MYND-type zinc-finger motif lies at 1399–1433 (CANCMREAQLYCCWNTSYCDYPCQQLHWPGHSATC). The disordered stretch occupies residues 1613 to 1648 (VPKATGRSGKNNSRMRQTYSNNINNSNPQGMRCNNN). Positions 1620-1648 (SGKNNSRMRQTYSNNINNSNPQGMRCNNN) are enriched in polar residues.

Its subcellular location is the nucleus. It is found in the chromosome. Functionally, chromatin reader that recognizes specific histone signatures to regulate transcription. Plays a role in neuronal development. In Drosophila melanogaster (Fruit fly), this protein is MYND-type zinc finger-containing chromatin reader Zmynd8.